Here is a 361-residue protein sequence, read N- to C-terminus: Anhydro-N-acetylmuramic acid kinase (361 aa).

10 to 17 (GTSLDGVD) is an ATP binding site.

Belongs to the anhydro-N-acetylmuramic acid kinase family.

The enzyme catalyses 1,6-anhydro-N-acetyl-beta-muramate + ATP + H2O = N-acetyl-D-muramate 6-phosphate + ADP + H(+). The protein operates within amino-sugar metabolism; 1,6-anhydro-N-acetylmuramate degradation. It functions in the pathway cell wall biogenesis; peptidoglycan recycling. Catalyzes the specific phosphorylation of 1,6-anhydro-N-acetylmuramic acid (anhMurNAc) with the simultaneous cleavage of the 1,6-anhydro ring, generating MurNAc-6-P. Is required for the utilization of anhMurNAc either imported from the medium or derived from its own cell wall murein, and thus plays a role in cell wall recycling. The chain is Anhydro-N-acetylmuramic acid kinase from Gluconobacter oxydans (strain 621H) (Gluconobacter suboxydans).